The sequence spans 193 residues: 3-isopropylmalate dehydratase small subunit (193 aa).

Belongs to the LeuD family. LeuD type 1 subfamily. Heterodimer of LeuC and LeuD.

It carries out the reaction (2R,3S)-3-isopropylmalate = (2S)-2-isopropylmalate. Its pathway is amino-acid biosynthesis; L-leucine biosynthesis; L-leucine from 3-methyl-2-oxobutanoate: step 2/4. Functionally, catalyzes the isomerization between 2-isopropylmalate and 3-isopropylmalate, via the formation of 2-isopropylmaleate. This is 3-isopropylmalate dehydratase small subunit from Bacillus anthracis (strain CDC 684 / NRRL 3495).